We begin with the raw amino-acid sequence, 326 residues long: Protein FAM50 homolog (326 aa).

Positions 76–112 (EISNRDLQVARGASSSTSLAKDSQEAREKEEHVAKHT) are disordered. The span at 97-109 (DSQEAREKEEHVA) shows a compositional bias: basic and acidic residues.

This sequence belongs to the FAM50 family.

This is Protein FAM50 homolog from Caenorhabditis briggsae.